The following is a 329-amino-acid chain: Biotin synthase (329 aa).

In terms of domain architecture, Radical SAM core spans 48-278 (FLGTGVDLCS…DRKIAVCGGR (231 aa)). [4Fe-4S] cluster-binding residues include C66, C70, and C73. 2 residues coordinate [2Fe-2S] cluster: S143 and C203.

Belongs to the radical SAM superfamily. Biotin synthase family. As to quaternary structure, homodimer. [4Fe-4S] cluster is required as a cofactor. The cofactor is [2Fe-2S] cluster.

It catalyses the reaction (4R,5S)-dethiobiotin + (sulfur carrier)-SH + 2 reduced [2Fe-2S]-[ferredoxin] + 2 S-adenosyl-L-methionine = (sulfur carrier)-H + biotin + 2 5'-deoxyadenosine + 2 L-methionine + 2 oxidized [2Fe-2S]-[ferredoxin]. The protein operates within cofactor biosynthesis; biotin biosynthesis; biotin from 7,8-diaminononanoate: step 2/2. Functionally, catalyzes the conversion of dethiobiotin (DTB) to biotin by the insertion of a sulfur atom into dethiobiotin via a radical-based mechanism. This is Biotin synthase from Geobacter sulfurreducens (strain ATCC 51573 / DSM 12127 / PCA).